The chain runs to 619 residues: Translation initiation factor IF-2 (619 aa).

Composition is skewed to low complexity over residues 1-18 (MTLNKKTNNENSSKTTPK) and 98-111 (PPQLQPQTPSLTKT). Disordered stretches follow at residues 1–24 (MTLNKKTNNENSSKTTPKLSKETD) and 90–113 (SEPQEKHTPPQLQPQTPSLTKTKP). Residues 121-289 (KKSPIVTIMG…ILLVSEIQNL (169 aa)) form the tr-type G domain. The G1 stretch occupies residues 130 to 137 (GHVDHGKT). A GTP-binding site is contributed by 130–137 (GHVDHGKT). Residues 155–159 (GITQH) are G2. Positions 176 to 179 (DTPG) are G3. GTP is bound by residues 176–180 (DTPGH) and 230–233 (NKID). The interval 230 to 233 (NKID) is G4. Residues 266–268 (SAL) are G5.

It belongs to the TRAFAC class translation factor GTPase superfamily. Classic translation factor GTPase family. IF-2 subfamily.

It localises to the cytoplasm. Functionally, one of the essential components for the initiation of protein synthesis. Protects formylmethionyl-tRNA from spontaneous hydrolysis and promotes its binding to the 30S ribosomal subunits. Also involved in the hydrolysis of GTP during the formation of the 70S ribosomal complex. This Onion yellows phytoplasma (strain OY-M) protein is Translation initiation factor IF-2.